The primary structure comprises 941 residues: Cell wall protein IFF3 (941 aa).

The signal sequence occupies residues Met1 to Ala20. N-linked (GlcNAc...) asparagine glycosylation is found at Asn36, Asn367, Asn686, Asn732, Asn790, Asn818, Asn825, Asn884, and Asn917. Asn917 is lipidated: GPI-anchor amidated asparagine. Positions Gly918–Met941 are cleaved as a propeptide — removed in mature form.

This sequence belongs to the HYR1/IFF family. The GPI-anchor is attached to the protein in the endoplasmic reticulum and serves to target the protein to the cell surface. There, the glucosamine-inositol phospholipid moiety is cleaved off and the GPI-modified mannoprotein is covalently attached via its lipidless GPI glycan remnant to the 1,6-beta-glucan of the outer cell wall layer.

Its subcellular location is the secreted. The protein localises to the cell wall. The protein resides in the membrane. In terms of biological role, GPI-anchored cell wall protein involved in cell wall organization, hyphal growth, as well as in host-fungal interaction and virulence. This Candida albicans (strain SC5314 / ATCC MYA-2876) (Yeast) protein is Cell wall protein IFF3 (IFF3).